We begin with the raw amino-acid sequence, 462 residues long: Cysteine--tRNA ligase (462 aa).

Position 30 (Cys-30) interacts with Zn(2+). The 'HIGH' region motif lies at 32-42 (MTVYDYCHVGH). Residues Cys-214, His-239, and Glu-243 each coordinate Zn(2+). A 'KMSKS' region motif is present at residues 271–275 (KMSKS). Position 274 (Lys-274) interacts with ATP.

It belongs to the class-I aminoacyl-tRNA synthetase family. In terms of assembly, monomer. Requires Zn(2+) as cofactor.

Its subcellular location is the cytoplasm. It carries out the reaction tRNA(Cys) + L-cysteine + ATP = L-cysteinyl-tRNA(Cys) + AMP + diphosphate. In Cupriavidus taiwanensis (strain DSM 17343 / BCRC 17206 / CCUG 44338 / CIP 107171 / LMG 19424 / R1) (Ralstonia taiwanensis (strain LMG 19424)), this protein is Cysteine--tRNA ligase.